Here is a 134-residue protein sequence, read N- to C-terminus: Translation initiation factor 2 subunit beta (134 aa).

Residues 1 to 12 are compositionally biased toward basic and acidic residues; sequence MGYEEQLDRALE. Residues 1-32 form a disordered region; the sequence is MGYEEQLDRALEETPDIEGTAARFSVPDPDVR.

Belongs to the eIF-2-beta/eIF-5 family. In terms of assembly, heterotrimer composed of an alpha, a beta and a gamma chain.

EIF-2 functions in the early steps of protein synthesis by forming a ternary complex with GTP and initiator tRNA. This is Translation initiation factor 2 subunit beta from Natronomonas pharaonis (strain ATCC 35678 / DSM 2160 / CIP 103997 / JCM 8858 / NBRC 14720 / NCIMB 2260 / Gabara) (Halobacterium pharaonis).